A 319-amino-acid polypeptide reads, in one-letter code: ATP-dependent 6-phosphofructokinase (319 aa).

ATP is bound at residue glycine 11. 21–25 (RAVVR) contacts ADP. Residues 72–73 (RS) and 102–105 (GDGS) each bind ATP. Residue aspartate 103 coordinates Mg(2+). Residue 125–127 (TID) coordinates substrate. Aspartate 127 (proton acceptor) is an active-site residue. Arginine 154 serves as a coordination point for ADP. Substrate is bound by residues arginine 162 and 169–171 (MGR). ADP is bound by residues 185–187 (GAE), arginine 211, and 213–215 (KKH). Substrate is bound by residues glutamate 222, arginine 243, and 249–252 (HVQR).

The protein belongs to the phosphofructokinase type A (PFKA) family. ATP-dependent PFK group I subfamily. Prokaryotic clade 'B1' sub-subfamily. As to quaternary structure, homotetramer. The cofactor is Mg(2+).

The protein resides in the cytoplasm. It catalyses the reaction beta-D-fructose 6-phosphate + ATP = beta-D-fructose 1,6-bisphosphate + ADP + H(+). It functions in the pathway carbohydrate degradation; glycolysis; D-glyceraldehyde 3-phosphate and glycerone phosphate from D-glucose: step 3/4. Allosterically activated by ADP and other diphosphonucleosides, and allosterically inhibited by phosphoenolpyruvate. Functionally, catalyzes the phosphorylation of D-fructose 6-phosphate to fructose 1,6-bisphosphate by ATP, the first committing step of glycolysis. This Natranaerobius thermophilus (strain ATCC BAA-1301 / DSM 18059 / JW/NM-WN-LF) protein is ATP-dependent 6-phosphofructokinase.